Here is a 298-residue protein sequence, read N- to C-terminus: Inosose dehydratase (298 aa).

The protein belongs to the IolE/MocC family. Glutathione serves as cofactor. Requires Co(2+) as cofactor. Mn(2+) is required as a cofactor.

It catalyses the reaction scyllo-inosose = 3D-3,5/4-trihydroxycyclohexane-1,2-dione + H2O. Its pathway is polyol metabolism; myo-inositol degradation into acetyl-CoA; acetyl-CoA from myo-inositol: step 2/7. Functionally, catalyzes the dehydration of inosose (2-keto-myo-inositol, 2KMI or 2,4,6/3,5-pentahydroxycyclohexanone) to 3D-(3,5/4)-trihydroxycyclohexane-1,2-dione (D-2,3-diketo-4-deoxy-epi-inositol). The polypeptide is Inosose dehydratase (Clostridium botulinum (strain Alaska E43 / Type E3)).